The chain runs to 789 residues: GDH/6PGL endoplasmic bifunctional protein (789 aa).

Residues 1–16 (MLLAAMCLALLGCLQA) form the signal peptide. Residue glutamine 17 is modified to Pyrrolidone carboxylic acid. The hexose-6-phosphate dehydrogenase stretch occupies residues 17 to 524 (QELKGHVSII…GGQLTFSQQQ (508 aa)). Residues 29–36 (GATGDLAK) and tyrosine 146 each bind NADP(+). A glycan (N-linked (GlcNAc...) asparagine) is linked at asparagine 154. Lysine 171 contacts NADP(+). Residues lysine 171, 201-205 (HYLGK), glutamate 240, and aspartate 259 contribute to the D-glucose 6-phosphate site. At lysine 205 the chain carries N6-succinyllysine. Histidine 264 functions as the Proton acceptor in the catalytic mechanism. Asparagine 279 carries an N-linked (GlcNAc...) asparagine glycan. D-glucose 6-phosphate-binding residues include lysine 357 and arginine 362. NADP(+) is bound at residue arginine 367. The residue at position 424 (lysine 424) is an N6-succinyllysine. The tract at residues 525–538 (LEVLIPDLGSVPKP) is linker. The segment at 539–789 (SDFQVLGARY…WYMDYEAFLG (251 aa)) is 6-phosphogluconolactonase. NADP(+) is bound at residue tryptophan 615. An N-linked (GlcNAc...) asparagine glycan is attached at asparagine 681.

It in the N-terminal section; belongs to the glucose-6-phosphate dehydrogenase family. This sequence in the C-terminal section; belongs to the glucosamine/galactosamine-6-phosphate isomerase family. 6-phosphogluconolactonase subfamily. Homodimer. Expressed in liver (at protein level). Expressed in muscles. Expressed in adipose tissues.

Its subcellular location is the endoplasmic reticulum lumen. It catalyses the reaction D-glucose 6-phosphate + NAD(+) = 6-phospho-D-glucono-1,5-lactone + NADH + H(+). The enzyme catalyses D-glucose 6-phosphate + NADP(+) = 6-phospho-D-glucono-1,5-lactone + NADPH + H(+). It carries out the reaction 6-phospho-D-glucono-1,5-lactone + H2O = 6-phospho-D-gluconate + H(+). The catalysed reaction is 2-deoxy-D-glucose 6-phosphate + NAD(+) = 2-deoxy-6-phospho-D-glucono-1,5-lactone + NADH + H(+). It catalyses the reaction 2-deoxy-D-glucose 6-phosphate + NADP(+) = 2-deoxy-6-phospho-D-glucono-1,5-lactone + NADPH + H(+). The enzyme catalyses D-galactose 6-phosphate + NADP(+) = 6-phospho-D-galactono-1,5-lactone + NADPH + H(+). It carries out the reaction D-galactose 6-phosphate + NAD(+) = 6-phospho-D-galactono-1,5-lactone + NADH + H(+). The catalysed reaction is D-glucosamine 6-phosphate + NADP(+) = 2-amino-2-deoxy-6-phospho-D-glucono-1,5-lactone + NADPH + 2 H(+). It catalyses the reaction D-glucose + NAD(+) = D-glucono-1,5-lactone + NADH + H(+). The enzyme catalyses D-glucose + NADP(+) = D-glucono-1,5-lactone + NADPH + H(+). It carries out the reaction D-glucose 6-sulfate + NADP(+) = 6-sulfo-D-glucono-1,5-lactone + NADPH + H(+). Its pathway is carbohydrate degradation; pentose phosphate pathway; D-ribulose 5-phosphate from D-glucose 6-phosphate (oxidative stage). It functions in the pathway carbohydrate degradation; pentose phosphate pathway; D-ribulose 5-phosphate from D-glucose 6-phosphate (oxidative stage): step 2/3. In terms of biological role, bifunctional enzyme localized in the lumen of the endoplasmic reticulum that catalyzes the first two steps of the oxidative branch of the pentose phosphate pathway/shunt, an alternative to glycolysis and a major source of reducing power and metabolic intermediates for biosynthetic processes. Has a hexose-6-phosphate dehydrogenase activity, with broad substrate specificity compared to glucose-6-phosphate 1-dehydrogenase/G6PD, and catalyzes the first step of the pentose phosphate pathway. In addition, acts as a 6-phosphogluconolactonase and catalyzes the second step of the pentose phosphate pathway. May have a dehydrogenase activity for alternative substrates including glucosamine 6-phosphate and glucose 6-sulfate. The main function of this enzyme is to provide reducing equivalents such as NADPH to maintain the adequate levels of reductive cofactors in the oxidizing environment of the endoplasmic reticulum. By producing NADPH that is needed by reductases of the lumen of the endoplasmic reticulum like corticosteroid 11-beta-dehydrogenase isozyme 1/HSD11B1, indirectly regulates their activity. In Mus musculus (Mouse), this protein is GDH/6PGL endoplasmic bifunctional protein.